The sequence spans 244 residues: 3-oxoacyl-[acyl-carrier-protein] reductase FabG (244 aa).

NADP(+) is bound by residues 12-15 and threonine 37; that span reads GASR. 2 residues coordinate Ca(2+): glycine 50 and glycine 53. Residues 59–60 and asparagine 86 contribute to the NADP(+) site; that span reads NV. Residue serine 138 coordinates substrate. Residue asparagine 145 coordinates Ca(2+). The active-site Proton acceptor is the tyrosine 151. NADP(+) contacts are provided by residues 151-155 and isoleucine 184; that span reads YAAAK. 2 residues coordinate Ca(2+): glutamate 233 and threonine 234.

The protein belongs to the short-chain dehydrogenases/reductases (SDR) family. In terms of assembly, homotetramer.

The catalysed reaction is a (3R)-hydroxyacyl-[ACP] + NADP(+) = a 3-oxoacyl-[ACP] + NADPH + H(+). Its pathway is lipid metabolism; fatty acid biosynthesis. Catalyzes the NADPH-dependent reduction of beta-ketoacyl-ACP substrates to beta-hydroxyacyl-ACP products, the first reductive step in the elongation cycle of fatty acid biosynthesis. The protein is 3-oxoacyl-[acyl-carrier-protein] reductase FabG (fabG) of Salmonella typhi.